The sequence spans 1461 residues: Phospholipid-transporting ATPase VB (1461 aa).

Residues 1-82 lie on the Cytoplasmic side of the membrane; sequence MALSVDSSWH…TTKYTLFTFL (82 aa). Residues 83–104 form a helical membrane-spanning segment; sequence PRNLFEQFHRWANLYFLFLVIL. Topologically, residues 105–110 are exoplasmic loop; that stretch reads NWMPSM. The chain crosses the membrane as a helical span at residues 111-132; it reads EVFHREITMLPLAIVLFVIMIK. At 133-316 the chain is on the cytoplasmic side; sequence DGMEDFKRHR…SKIERRMNID (184 aa). A helical membrane pass occupies residues 317–338; sequence IFFCIGILILMCLIGAVGHSIW. Over 339–368 the chain is Exoplasmic loop; it reads NGTFEEHPPFDVPDANGSFLPSALGGFYMF. The helical transmembrane segment at 369-390 threads the bilayer; sequence LTMIILLQVLIPISLYVSIELV. Topologically, residues 391–1111 are cytoplasmic; that stretch reads KLGQVFFLSN…GHWCYSRLAR (721 aa). The 4-aspartylphosphate intermediate role is filled by aspartate 433. ATP contacts are provided by aspartate 433, lysine 434, and threonine 435. Aspartate 433 contacts Mg(2+). Threonine 435 is a Mg(2+) binding site. Polar residues-rich tracts occupy residues 496–511 and 530–539; these read MRSQ…SQSA and SQPPVAFSSS. 2 disordered regions span residues 496-541 and 640-687; these read MRSQ…SSIE and TAPS…MWDQ. ATP contacts are provided by glutamate 724, phenylalanine 766, lysine 790, arginine 835, threonine 915, glycine 916, aspartate 917, arginine 1029, and lysine 1035. Aspartate 1055 provides a ligand contact to Mg(2+). 2 residues coordinate ATP: asparagine 1058 and aspartate 1059. Mg(2+) is bound at residue aspartate 1059. The chain crosses the membrane as a helical span at residues 1112 to 1132; that stretch reads MVVYYLYKNVCYVNLLFWYQF. Over 1133–1144 the chain is Exoplasmic loop; the sequence is FCGFSSSTMIDY. A helical membrane pass occupies residues 1145–1164; that stretch reads WQMIFFNLFFTSLPPLVFGV. Over 1165-1194 the chain is Cytoplasmic; it reads LDKDISAETLLALPELYKSGQNSECYNLST. Residues 1195–1216 traverse the membrane as a helical segment; the sequence is FWISMVDAFYQSLICFFIPYLA. Over 1217-1223 the chain is Exoplasmic loop; sequence YKGSDID. A helical transmembrane segment spans residues 1224–1246; that stretch reads VFTFGTPINTISLTTILLHQAME. Residues 1247-1252 are Cytoplasmic-facing; the sequence is MKTWTI. The chain crosses the membrane as a helical span at residues 1253–1273; that stretch reads FHGVVLLGSFLMYFLVSLLYN. At 1274-1291 the chain is on the exoplasmic loop side; sequence ATCVICNSPTNPYWVMEG. A helical membrane pass occupies residues 1292-1316; the sequence is QLSNPTFYLVCFLTPVVALLPRYFF. Over 1317–1461 the chain is Cytoplasmic; the sequence is LSLQGTCGKS…HRRSQSSLTI (145 aa). The disordered stretch occupies residues 1346-1397; that stretch reads IQSWRSRQRPAPVPEVARPTHHPVSSITGQDFSASTPKSSNPPKRKHVEESV. Polar residues predominate over residues 1368 to 1387; that stretch reads PVSSITGQDFSASTPKSSNP.

It belongs to the cation transport ATPase (P-type) (TC 3.A.3) family. Type IV subfamily. As to quaternary structure, component of a P4-ATPase flippase complex which consists of a catalytic alpha subunit ATP10B and an accessory beta subunit TMEM30A. Requires Mg(2+) as cofactor. Autophosphorylated at the conserved aspartate of the P-type ATPase signature sequence. In terms of tissue distribution, expressed in predominantly in brain structures including medulla oblongata, substantia nigra and basal ganglia. Expressed in the gastrointestinal system with highest levels in the small intestine and colon. Also expressed at low levels in testis and thymus.

The protein localises to the late endosome membrane. Its subcellular location is the lysosome membrane. It is found in the endoplasmic reticulum membrane. The enzyme catalyses ATP + H2O + phospholipidSide 1 = ADP + phosphate + phospholipidSide 2.. It catalyses the reaction a beta-D-glucosyl-(1&lt;-&gt;1')-N-acylsphing-4-enine(out) + ATP + H2O = a beta-D-glucosyl-(1&lt;-&gt;1')-N-acylsphing-4-enine(in) + ADP + phosphate + H(+). Its function is as follows. Catalytic component of a P4-ATPase flippase complex, which catalyzes the hydrolysis of ATP coupled to the transport of glucosylceramide (GlcCer) from the outer to the inner leaflet of lysosome membranes. Plays an important role in the maintenance of lysosome membrane integrity and function in cortical neurons. The sequence is that of Phospholipid-transporting ATPase VB from Homo sapiens (Human).